Consider the following 274-residue polypeptide: Mitogen-activated protein kinase 4 (274 aa).

ATP is bound by residues 1–8 (GCGGNGLV) and K23. In terms of domain architecture, Protein kinase spans 1–274 (GCGGNGLVLS…KILTFSPMDR (274 aa)). D123 acts as the Proton acceptor in catalysis. Residue S160 is modified to Phosphoserine. The SEG motif signature appears at 160-162 (SEG).

This sequence belongs to the protein kinase superfamily. CMGC Ser/Thr protein kinase family. MAP kinase subfamily. In terms of assembly, homodimer. Heterodimer with ERK3/MAPK6. Interacts with MAPKAPK5. It depends on Mg(2+) as a cofactor. In terms of processing, phosphorylated by PAK1, PAK2 and PAK3 in the activation loop resulting in catalytic activation. Phosphorylated by MAPKAPK5 at other sites. Exclusively detected in the brain, where expression is restricted to the choroid plexus and hippocampus, and to a lesser extent in lung.

It is found in the cytoplasm. The protein resides in the nucleus. It carries out the reaction L-seryl-[protein] + ATP = O-phospho-L-seryl-[protein] + ADP + H(+). The enzyme catalyses L-threonyl-[protein] + ATP = O-phospho-L-threonyl-[protein] + ADP + H(+). Its activity is regulated as follows. Activated by phosphorylation in the activation loop. Its function is as follows. Atypical MAPK protein. Phosphorylates microtubule-associated protein 2 (MAP2) and MAPKAPK5. The precise role of the complex formed with MAPKAPK5 is still unclear, but the complex follows a complex set of phosphorylation events: upon interaction with atypical MAPKAPK5, ERK4/MAPK4 is phosphorylated and then mediates phosphorylation and activation of MAPKAPK5, which in turn phosphorylates ERK4/MAPK4. May promote entry in the cell cycle. This is Mitogen-activated protein kinase 4 (Mapk4) from Rattus norvegicus (Rat).